Consider the following 1166-residue polypeptide: IQ domain-containing protein N (1166 aa).

Residues 1-19 show a composition bias toward polar residues; the sequence is MQPATQLQFTNHLSPNGQC. The disordered stretch occupies residues 1–56; sequence MQPATQLQFTNHLSPNGQCILQPPPTPSLPDKMEKAPPQPQHEGLKSEEHLPQQPA. The 30-residue stretch at 89-118 folds into the IQ 1 domain; that stretch reads HARAATLIQANWRGYRLRQKLISQMTAAKA. 3 disordered regions span residues 431-450, 769-797, and 829-848; these read VCPG…VATP, LSAP…TTQG, and DSGA…PCQE. 5 consecutive IQ domains span residues 907–932, 928–955, 952–979, 1091–1119, and 1114–1143; these read AVTT…RRAT, HRRA…RATT, RATT…MLHP, RDKA…MAAK, and QQMA…LLGP. A disordered region spans residues 1145–1166; that stretch reads DPWSSSQHMHWASSQHTHWPGI. A compositionally biased stretch (polar residues) spans 1147–1166; sequence WSSSQHMHWASSQHTHWPGI.

As to quaternary structure, interacts with calmodulin.

In terms of biological role, essential for spermiogenesis and fertilization. May be required for manchette assembly in elongating spermatids. The protein is IQ domain-containing protein N (IQCN) of Macaca fascicularis (Crab-eating macaque).